The sequence spans 141 residues: Large ribosomal subunit protein uL11 (141 aa).

Belongs to the universal ribosomal protein uL11 family. In terms of assembly, part of the ribosomal stalk of the 50S ribosomal subunit. Interacts with L10 and the large rRNA to form the base of the stalk. L10 forms an elongated spine to which L12 dimers bind in a sequential fashion forming a multimeric L10(L12)X complex. In terms of processing, one or more lysine residues are methylated.

Forms part of the ribosomal stalk which helps the ribosome interact with GTP-bound translation factors. The polypeptide is Large ribosomal subunit protein uL11 (Lactobacillus johnsonii (strain CNCM I-12250 / La1 / NCC 533)).